A 360-amino-acid chain; its full sequence is Peptide chain release factor 1 (360 aa).

At Q235 the chain carries N5-methylglutamine. The segment at 285 to 311 (KRQQAQASERRNLLGSGDRSDRHRTYN) is disordered. Residues 292-308 (SERRNLLGSGDRSDRHR) show a composition bias toward basic and acidic residues.

It belongs to the prokaryotic/mitochondrial release factor family. Post-translationally, methylated by PrmC. Methylation increases the termination efficiency of RF1.

It is found in the cytoplasm. Peptide chain release factor 1 directs the termination of translation in response to the peptide chain termination codons UAG and UAA. The protein is Peptide chain release factor 1 of Hamiltonella defensa subsp. Acyrthosiphon pisum (strain 5AT).